Here is a 196-residue protein sequence, read N- to C-terminus: Recombination protein RecR (196 aa).

A C4-type zinc finger spans residues 55 to 70 (CELCGNLESESPCSIC). Positions 78-173 (DIVCVVEEIT…KLSFLAHGIP (96 aa)) constitute a Toprim domain.

It belongs to the RecR family.

Functionally, may play a role in DNA repair. It seems to be involved in an RecBC-independent recombinational process of DNA repair. It may act with RecF and RecO. The polypeptide is Recombination protein RecR (Neorickettsia sennetsu (strain ATCC VR-367 / Miyayama) (Ehrlichia sennetsu)).